Reading from the N-terminus, the 407-residue chain is MKRAFIMVLDSFGIGATEDAERFGDAGSDTLGHIAEACAKGEADIGRKGPLHLPNLTKLGLAKAHEGATGFIPAGMDGNAEITGAYAWAHELSSGKDTPSGHWEIAGVPVLFDWGYFTDEKNSFPQELLDKLVERANLPGYLGNCHSSGTVILDELGEEHMKTGKPIFYTSADSVFQIACHEETFGLDRLYELCEIAREELTEGGYNIGRVIARPFVGDKAGNFQRTGNRHDLAVEPPSPVVLKKLVDEKGGHVVSVGKIADIYANMGITKKVKATGLDALFDATIKEMKEAGDNTIVFTNFVDFDSSWGHRRDVAGYAAGLELFDRRLPELLELVGEDDIIIFTADHGCDPTWKGTDHTREHIPVLVYGPKVKPGSLGHRDTFADIGQTVAKYFGLSDMEYGKALF.

Mn(2+) contacts are provided by Asp10, Asp306, His311, Asp347, His348, and His359.

The protein belongs to the phosphopentomutase family. Mn(2+) serves as cofactor.

It is found in the cytoplasm. The enzyme catalyses 2-deoxy-alpha-D-ribose 1-phosphate = 2-deoxy-D-ribose 5-phosphate. It catalyses the reaction alpha-D-ribose 1-phosphate = D-ribose 5-phosphate. Its pathway is carbohydrate degradation; 2-deoxy-D-ribose 1-phosphate degradation; D-glyceraldehyde 3-phosphate and acetaldehyde from 2-deoxy-alpha-D-ribose 1-phosphate: step 1/2. Its function is as follows. Isomerase that catalyzes the conversion of deoxy-ribose 1-phosphate (dRib-1-P) and ribose 1-phosphate (Rib-1-P) to deoxy-ribose 5-phosphate (dRib-5-P) and ribose 5-phosphate (Rib-5-P), respectively. The protein is Phosphopentomutase of Cronobacter sakazakii (strain ATCC BAA-894) (Enterobacter sakazakii).